We begin with the raw amino-acid sequence, 534 residues long: Glycerophosphodiester transporter GIT2 (534 aa).

12 consecutive transmembrane segments (helical) span residues 63-83 (GAGL…MACL), 96-116 (AISN…LSFG), 135-155 (LIAF…QGFF), 163-183 (FCLG…ASEF), 202-222 (FMID…LWIF), 230-250 (LWRV…FIRL), 289-309 (MIWF…AIIL), 322-342 (WGWS…GAFS), 350-370 (LTLA…SACL), 377-397 (VAAF…GPGG), 417-437 (GIAA…FPAI), and 453-473 (VPFY…FFLC).

It belongs to the major facilitator superfamily. Sugar transporter (TC 2.A.1.1) family.

It localises to the cell membrane. Its function is as follows. Probable glycerophosphodiester transporter. Does not possess detectable glycerophosphoinositol (GroPIns) transport activity. Might be involved in the uptake of glycerophosphocholine (GroPCho). The expanded ability to utilize GroPIns and GroPCho results from the organism's pathogenic nature and its need to occupy a variety of environments within its host organism. This possibility is buttressed by the fact that GroPIns and GroPCho are present and abundant in human fluids. The chain is Glycerophosphodiester transporter GIT2 from Candida albicans (strain SC5314 / ATCC MYA-2876) (Yeast).